A 117-amino-acid polypeptide reads, in one-letter code: Translation initiation factor 1A (117 aa).

Residues 17 to 92 (IRVPLPDRSK…ERGDIVYRYT (76 aa)) form the S1-like domain.

This sequence belongs to the eIF-1A family.

Seems to be required for maximal rate of protein biosynthesis. Enhances ribosome dissociation into subunits and stabilizes the binding of the initiator Met-tRNA(I) to 40 S ribosomal subunits. The sequence is that of Translation initiation factor 1A from Thermococcus kodakarensis (strain ATCC BAA-918 / JCM 12380 / KOD1) (Pyrococcus kodakaraensis (strain KOD1)).